Consider the following 347-residue polypeptide: Ferrochelatase (347 aa).

The Fe cation site is built by H193 and E273.

It belongs to the ferrochelatase family.

Its subcellular location is the cytoplasm. The enzyme catalyses heme b + 2 H(+) = protoporphyrin IX + Fe(2+). The protein operates within porphyrin-containing compound metabolism; protoheme biosynthesis; protoheme from protoporphyrin-IX: step 1/1. Its function is as follows. Catalyzes the ferrous insertion into protoporphyrin IX. This Rickettsia canadensis (strain McKiel) protein is Ferrochelatase.